The sequence spans 256 residues: Eukaryotic translation initiation factor 3 subunit J (256 aa).

Positions M1–V67 are sufficient for interaction with EIF3B. Positions M1–L106 are disordered. S9, S11, and S18 each carry phosphoserine. Residues E38–K57 show a composition bias toward acidic residues. Positions K58–K104 are enriched in basic and acidic residues. Residues K68–T133 are a coiled coil. Residue K104 forms a Glycyl lysine isopeptide (Lys-Gly) (interchain with G-Cter in SUMO2) linkage. T107 carries the phosphothreonine modification. At S125 the chain carries Phosphoserine. The disordered stretch occupies residues Q214 to G243. Residues Y241–M256 form a promotes stable association with the 40S ribosome region. Phosphotyrosine is present on Y252.

The protein belongs to the eIF-3 subunit J family. In terms of assembly, component of the eukaryotic translation initiation factor 3 (eIF-3) complex, which is composed of 13 subunits: EIF3A, EIF3B, EIF3C, EIF3D, EIF3E, EIF3F, EIF3G, EIF3H, EIF3I, EIF3J, EIF3K, EIF3L and EIF3M. The eIF-3 complex appears to include 3 stable modules: module A is composed of EIF3A, EIF3B, EIF3G and EIF3I; module B is composed of EIF3F, EIF3H, and EIF3M; and module C is composed of EIF3C, EIF3D, EIF3E, EIF3K and EIF3L. EIF3C of module C binds EIF3B of module A and EIF3H of module B, thereby linking the three modules. EIF3J is a labile subunit that binds to the eIF-3 complex via EIF3B. The eIF-3 complex interacts with RPS6KB1 under conditions of nutrient depletion. Mitogenic stimulation leads to binding and activation of a complex composed of MTOR and RPTOR, leading to phosphorylation and release of RPS6KB1 and binding of EIF4B to eIF-3. Phosphorylated. Phosphorylation is enhanced upon serum stimulation.

Its subcellular location is the cytoplasm. Component of the eukaryotic translation initiation factor 3 (eIF-3) complex, which is required for several steps in the initiation of protein synthesis. The eIF-3 complex associates with the 40S ribosome and facilitates the recruitment of eIF-1, eIF-1A, eIF-2:GTP:methionyl-tRNAi and eIF-5 to form the 43S pre-initiation complex (43S PIC). The eIF-3 complex stimulates mRNA recruitment to the 43S PIC and scanning of the mRNA for AUG recognition. The eIF-3 complex is also required for disassembly and recycling of post-termination ribosomal complexes and subsequently prevents premature joining of the 40S and 60S ribosomal subunits prior to initiation. The eIF-3 complex specifically targets and initiates translation of a subset of mRNAs involved in cell proliferation, including cell cycling, differentiation and apoptosis, and uses different modes of RNA stem-loop binding to exert either translational activation or repression. This subunit binds directly within the mRNA entry channel of the 40S ribosome to the aminoacyl (A) site. It may regulate the interaction between the 43S PIC and mRNA. This is Eukaryotic translation initiation factor 3 subunit J from Bos taurus (Bovine).